A 31-amino-acid polypeptide reads, in one-letter code: Cyclotide psybry C (31 aa).

A cross-link (cyclopeptide (Gly-Asn)) is located at residues 1–31; it reads GFNPCGETCQIDQTCHAPGCTCSIANICVRN. 3 disulfides stabilise this stretch: Cys5–Cys20, Cys9–Cys22, and Cys15–Cys28.

Post-translationally, this is a cyclic peptide.

Functionally, probably participates in a plant defense mechanism. The protein is Cyclotide psybry C of Psychotria brachyceras.